The chain runs to 120 residues: SPbeta prophage-derived DSR anti-defense 1 (120 aa).

It belongs to the DSR anti-defense 1 family. In terms of assembly, interacts with Bacillus subtilis DSR2 (via C-terminus) in a 2:4 ratio; this interaction leads to the absence of activation of the NADase defense activity of DSR2.

Counteracts the defense-associated sirtuin 2 (DSR2) defense system of the host. Inhibits the NADase activity of host DSR2 by competing with the tail tube protein that normally activates DSR2. This is SPbeta prophage-derived DSR anti-defense 1 (yotI) from Bacillus subtilis (strain 168).